Here is a 443-residue protein sequence, read N- to C-terminus: ATP-dependent protease ATPase subunit HslU (443 aa).

ATP-binding positions include V18, G60–E65, D255, E321, and R393.

It belongs to the ClpX chaperone family. HslU subfamily. A double ring-shaped homohexamer of HslV is capped on each side by a ring-shaped HslU homohexamer. The assembly of the HslU/HslV complex is dependent on binding of ATP.

Its subcellular location is the cytoplasm. Its function is as follows. ATPase subunit of a proteasome-like degradation complex; this subunit has chaperone activity. The binding of ATP and its subsequent hydrolysis by HslU are essential for unfolding of protein substrates subsequently hydrolyzed by HslV. HslU recognizes the N-terminal part of its protein substrates and unfolds these before they are guided to HslV for hydrolysis. This chain is ATP-dependent protease ATPase subunit HslU, found in Colwellia psychrerythraea (strain 34H / ATCC BAA-681) (Vibrio psychroerythus).